Consider the following 529-residue polypeptide: Bifunctional purine biosynthesis protein PurH (529 aa).

The MGS-like domain maps to 1-148 (MQQRRPVRRA…KNHKDVAIVV (148 aa)). Position 287 is an N6-acetyllysine (Lys-287).

This sequence belongs to the PurH family.

The catalysed reaction is (6R)-10-formyltetrahydrofolate + 5-amino-1-(5-phospho-beta-D-ribosyl)imidazole-4-carboxamide = 5-formamido-1-(5-phospho-D-ribosyl)imidazole-4-carboxamide + (6S)-5,6,7,8-tetrahydrofolate. The enzyme catalyses IMP + H2O = 5-formamido-1-(5-phospho-D-ribosyl)imidazole-4-carboxamide. It participates in purine metabolism; IMP biosynthesis via de novo pathway; 5-formamido-1-(5-phospho-D-ribosyl)imidazole-4-carboxamide from 5-amino-1-(5-phospho-D-ribosyl)imidazole-4-carboxamide (10-formyl THF route): step 1/1. Its pathway is purine metabolism; IMP biosynthesis via de novo pathway; IMP from 5-formamido-1-(5-phospho-D-ribosyl)imidazole-4-carboxamide: step 1/1. In Escherichia coli (strain 55989 / EAEC), this protein is Bifunctional purine biosynthesis protein PurH.